A 447-amino-acid chain; its full sequence is Divalent metal cation transporter MntH (447 aa).

11 helical membrane passes run 26-48 (AGFWKTLMAYSGPGFLIAVGYMD), 65-85 (TLLSVILLSSLIAMLLQAMSA), 108-128 (GFLLWIVAELAIMATDIAEII), 140-160 (IPLIIGILITAADVLILLLLM), 169-189 (AIVATLVAVILIVFAYEVLLS), 212-232 (MLYLSLGIVGATVMPHDLYLG), 264-284 (LFLAFIVNSLLLILGAALFYG), 304-324 (IVGAIASPVLSMLFAVALLAS), 359-379 (VLSVAPVLIFAIYYHGDEAKI), 383-403 (LTFSQVFLSVALPFAVIPLVI), and 426-446 (TATIVLILLNIYLILQTLGLI).

The protein belongs to the NRAMP family.

It is found in the cell membrane. In terms of biological role, h(+)-stimulated, divalent metal cation uptake system. This Pediococcus pentosaceus (strain ATCC 25745 / CCUG 21536 / LMG 10740 / 183-1w) protein is Divalent metal cation transporter MntH.